Reading from the N-terminus, the 319-residue chain is Cytochrome c biogenesis protein CcsA (319 aa).

8 helical membrane-spanning segments follow: residues 15–35, 44–64, 71–91, 96–116, 141–161, 223–243, 258–278, and 284–304; these read FSIV…NKIV, GMIL…IFAG, LYES…IPYF, LSAI…SGFF, MILA…LLVI, VISL…VWAN, WAFI…NINL, and AIVA…VNLL.

The protein belongs to the CcmF/CycK/Ccl1/NrfE/CcsA family. As to quaternary structure, may interact with Ccs1.

Its subcellular location is the plastid. The protein resides in the chloroplast thylakoid membrane. Functionally, required during biogenesis of c-type cytochromes (cytochrome c6 and cytochrome f) at the step of heme attachment. The chain is Cytochrome c biogenesis protein CcsA from Fagopyrum esculentum subsp. ancestrale (Wild buckwheat).